Here is a 187-residue protein sequence, read N- to C-terminus: POM121 and ZP3 fusion protein (187 aa).

The interval 166-187 (GTPSHSRRQPRVVSQWSTSASL) is disordered. The segment covering 177-187 (VVSQWSTSASL) has biased composition (polar residues).

Expressed in spleen, thymus, pancreas, testis, ovary, small intestine, colon and lymphocytes.

The chain is POM121 and ZP3 fusion protein (POMZP3) from Homo sapiens (Human).